A 429-amino-acid polypeptide reads, in one-letter code: MRSYEKSKAAFKEAQKLMPGGVNSPVRAFKSVDMDPIFMQRGKGSKIFDIDGNEYIDYVLSWGPLILGHTNDRVVESLKKVAENGTSFGASTEVENELAKLVIDRVPSVEIVRMVSSGTEATMSALRLARGYTGRNKILKFEGCYHGHGDSLLIKAGSGVATLGLPDSPGVPEGIAMNTITVPYNDLESVALAFREYGEDIAGVIVEPVAGNMGVVPPQEGFLQGLRDMTEQYGALLIFDEVMTGFRVDYNCAQGYFGVTPDLTCLGKVIGGGLPVGAYGGKADIMERIAPSGPIYQAGTLSGNPLAMTAGLETLQQLTPESYQEFVKKGDMLEEGISKAAAAHGIPHTFNRAGSMIGFFFTNEPVINYEAAKSSDLKLFAKYYKGMADAGVFLPPSQFEGLFLSTAHTMEDIENTIQAAEKVFQAISR.

Lysine 268 bears the N6-(pyridoxal phosphate)lysine mark.

Belongs to the class-III pyridoxal-phosphate-dependent aminotransferase family. HemL subfamily. Homodimer. Pyridoxal 5'-phosphate serves as cofactor.

The protein resides in the cytoplasm. The catalysed reaction is (S)-4-amino-5-oxopentanoate = 5-aminolevulinate. Its pathway is porphyrin-containing compound metabolism; protoporphyrin-IX biosynthesis; 5-aminolevulinate from L-glutamyl-tRNA(Glu): step 2/2. In Bacillus velezensis (strain DSM 23117 / BGSC 10A6 / LMG 26770 / FZB42) (Bacillus amyloliquefaciens subsp. plantarum), this protein is Glutamate-1-semialdehyde 2,1-aminomutase 2.